The sequence spans 155 residues: MANLSQLMENEVFMAFASYTTIVLSKMNFMSTATAFYRLTKKVFANPEDCAGFGKGENAKKYLRTDDRVERVRRAHLNDLENIVPFLGIGLLYSLSGPDLSTAILHFRLFVRARIYHTIAYLTPLPQPNRALAFFIGYGVTLSMAYRLLKSKLYL.

Residues 3 to 9 (NLSQLME) lie on the Lumenal side of the membrane. Residues 10 to 33 (NEVFMAFASYTTIVLSKMNFMSTA) traverse the membrane as a helical segment. The Cytoplasmic segment spans residues 34–62 (TAFYRLTKKVFANPEDCAGFGKGENAKKY). Position 38 (R38) interacts with glutathione. K42, K55, and K60 each carry N6-acetyllysine. The chain crosses the membrane as a helical span at residues 63-96 (LRTDDRVERVRRAHLNDLENIVPFLGIGLLYSLS). Residues R73, R74, H76, and E81 each contribute to the glutathione site. At 97–99 (GPD) the chain is on the lumenal side. Residues 100-123 (LSTAILHFRLFVRARIYHTIAYLT) traverse the membrane as a helical segment. Y121 contributes to the glutathione binding site. Residues 124–128 (PLPQP) are Cytoplasmic-facing. The chain crosses the membrane as a helical span at residues 129–148 (NRALAFFIGYGVTLSMAYRL). Over 149–155 (LKSKLYL) the chain is Lumenal.

Belongs to the MAPEG family. As to quaternary structure, homotrimer; The trimer binds only one molecule of glutathione.

It is found in the endoplasmic reticulum membrane. The protein resides in the mitochondrion outer membrane. It catalyses the reaction RX + glutathione = an S-substituted glutathione + a halide anion + H(+). Functionally, conjugation of reduced glutathione to a wide number of exogenous and endogenous hydrophobic electrophiles. The chain is Microsomal glutathione S-transferase 1 (MGST1) from Bos taurus (Bovine).